A 527-amino-acid polypeptide reads, in one-letter code: Lysine--tRNA ligase (527 aa).

Residues 44 to 52 (PSGLPHIGT) carry the 'HIGH' region motif. The short motif at 290 to 294 (KISKS) is the 'KMSKS' region element. Residue lysine 293 participates in ATP binding.

The protein belongs to the class-I aminoacyl-tRNA synthetase family.

It is found in the cytoplasm. It catalyses the reaction tRNA(Lys) + L-lysine + ATP = L-lysyl-tRNA(Lys) + AMP + diphosphate. In Roseobacter denitrificans (strain ATCC 33942 / OCh 114) (Erythrobacter sp. (strain OCh 114)), this protein is Lysine--tRNA ligase.